The sequence spans 424 residues: Histone-binding protein RBBP7 (424 aa).

WD repeat units follow at residues 47–121, 127–172, 180–216, 227–268, 274–311, 317–368, and 375–402; these read QWLP…KINH, RARY…LRLR, GLSW…KIVD, VVED…HSVD, VNCL…LHSF, EIFQ…LFIH, and ISDF…IWQM. Residues 359–404 are interaction with HAT1; it reads DGPPELLFIHGGHTAKISDFSWNPNEPWVICSVSEDNIMQIWQMAE.

This sequence belongs to the WD repeat RBAP46/RBAP48/MSI1 family. As to quaternary structure, binds directly to helix 1 of the histone fold of histone H4, a region that is not accessible when H4 is in chromatin. Also interacts with histone H2B and HAT1.

Its subcellular location is the nucleus. Functionally, core histone-binding subunit that may target chromatin remodeling factors, histone acetyltransferases and histone deacetylases to their histone substrates in a manner that is regulated by nucleosomal DNA. Component of several complexes which regulate chromatin metabolism. In Gallus gallus (Chicken), this protein is Histone-binding protein RBBP7 (RBBP7).